A 792-amino-acid polypeptide reads, in one-letter code: Pentatricopeptide repeat-containing protein At4g30700 (792 aa).

16 PPR repeats span residues 51–81 (DISLLTKLTQRLSDLGAIYYARDIFLSVQRP), 82–117 (DVFLFNVLMRGFSVNESPHSSLSVFAHLRKSTDLKP), 118–152 (NSSTYAFAISAASGFRDDRAGRVIHGQAVVDGCDS), 153–183 (ELLLGSNIVKMYFKFWRVEDARKVFDRMPEK), 184–218 (DTILWNTMISGYRKNEMYVESIQVFRDLINESCTR), 220–254 (DTTTLLDILPAVAELQELRLGMQIHSLATKTGCYS), 255–285 (HDYVLTGFISLYSKCGKIKMGSALFREFRKP), 286–320 (DIVAYNAMIHGYTSNGETELSLSLFKELMLSGARL), 321–352 (RSSTLVSLVPVSGHLMLIYAIHGYCLKSNFLS), 353–383 (HASVSTALTTVYSKLNEIESARKLFDESPEK), 384–418 (SLPSWNAMISGYTQNGLTEDAISLFREMQKSEFSP), 419–453 (NPVTITCILSACAQLGALSLGKWVHDLVRSTDFES), 454–484 (SIYVSTALIGMYAKCGSIAEARRLFDLMTKK), 485–519 (NEVTWNTMISGYGLHGQGQEALNIFYEMLNSGITP), 520–555 (TPVTFLCVLYACSHAGLVKEGDEIFNSMIHRYGFEP), and 556–586 (SVKHYACMVDILGRAGHLQRALQFIEAMSIE). The segment at 591-666 (VWETLLGACR…APGYTLIEIG (76 aa)) is type E motif. A type E(+) motif region spans residues 667-697 (ETPHVFTSGDQSHPQVKEIYEKLEKLEGKMR). The type DYW motif stretch occupies residues 698 to 792 (EAGYQPETEL…DGVCSCGDYW (95 aa)).

The protein belongs to the PPR family. PCMP-H subfamily.

This is Pentatricopeptide repeat-containing protein At4g30700 (DYW9) from Arabidopsis thaliana (Mouse-ear cress).